Consider the following 394-residue polypeptide: Elongation factor Tu (394 aa).

The tr-type G domain maps to 10 to 204 (KPHVNIGTIG…AVDSYIPQPI (195 aa)). A G1 region spans residues 19–26 (GHVDHGKT). 19 to 26 (GHVDHGKT) is a GTP binding site. Residue Thr26 participates in Mg(2+) binding. The segment at 60–64 (GITIS) is G2. Residues 81–84 (DCPG) are G3. GTP-binding positions include 81–85 (DCPGH) and 136–139 (NKVD). The segment at 136–139 (NKVD) is G4. Positions 174–176 (SAL) are G5.

This sequence belongs to the TRAFAC class translation factor GTPase superfamily. Classic translation factor GTPase family. EF-Tu/EF-1A subfamily. As to quaternary structure, monomer.

The protein resides in the cytoplasm. The enzyme catalyses GTP + H2O = GDP + phosphate + H(+). Its function is as follows. GTP hydrolase that promotes the GTP-dependent binding of aminoacyl-tRNA to the A-site of ribosomes during protein biosynthesis. The polypeptide is Elongation factor Tu (Rickettsia typhi (strain ATCC VR-144 / Wilmington)).